Reading from the N-terminus, the 146-residue chain is ATP synthase F(0) complex subunit C2, mitochondrial (146 aa).

Residues 1-71 (MYACSKFVST…RSFQTSAISR (71 aa)) constitute a mitochondrion transit peptide. The helical transmembrane segment at 87–107 (VGVAGSGAGIGTVFGSLIIGY) threads the bilayer. The residue at position 114 (lysine 114) is an N6,N6,N6-trimethyllysine. The chain crosses the membrane as a helical span at residues 122 to 142 (ILGFALSEAMGLFCLMVAFLI).

Belongs to the ATPase C chain family. In terms of assembly, F-type ATPases have 2 components, CF(1) - the catalytic core - and CF(0) - the membrane proton channel. CF(1) has five subunits: alpha(3), beta(3), gamma(1), delta(1), epsilon(1). CF(0) has three main subunits: a, b and c. Interacts with DNAJC30; interaction is direct. In terms of processing, trimethylated by ATPSCKMT at Lys-114. Methylation is required for proper incorporation of the C subunit into the ATP synthase complex and mitochondrial respiration.

The protein localises to the mitochondrion membrane. Functionally, mitochondrial membrane ATP synthase (F(1)F(0) ATP synthase or Complex V) produces ATP from ADP in the presence of a proton gradient across the membrane which is generated by electron transport complexes of the respiratory chain. F-type ATPases consist of two structural domains, F(1) - containing the extramembraneous catalytic core and F(0) - containing the membrane proton channel, linked together by a central stalk and a peripheral stalk. During catalysis, ATP synthesis in the catalytic domain of F(1) is coupled via a rotary mechanism of the central stalk subunits to proton translocation. Part of the complex F(0) domain. A homomeric c-ring of probably 10 subunits is part of the complex rotary element. This Mus musculus (Mouse) protein is ATP synthase F(0) complex subunit C2, mitochondrial.